The primary structure comprises 656 residues: Choline transporter-like protein 1 (656 aa).

G2 is lipidated: N-myristoyl glycine. Topologically, residues 2–29 (GCCSSASAAQSSKREWKPLEDRSCTDIP) are cytoplasmic. The chain crosses the membrane as a helical span at residues 30-50 (WLLLFVLFCIGMGFICGFSVA). Residues 51–211 (TGAAARLVSG…RLISGVMTSK (161 aa)) are Extracellular-facing. N-linked (GlcNAc...) asparagine glycosylation is found at N134 and N179. A helical membrane pass occupies residues 212–232 (EIILGLCLLSLVLSMILMVII). Residues 233 to 237 (RYISR) lie on the Cytoplasmic side of the membrane. A helical transmembrane segment spans residues 238–258 (VLVWILTILVILGSLGGTGVL). Topologically, residues 259–287 (WWLYAKQRRSPKETVIPEQLQIAEDNLRA) are extracellular. Residues 288–308 (LLIYAISATVFTVILFLIMLV) form a helical membrane-spanning segment. The Cytoplasmic portion of the chain corresponds to 309–314 (MRKRVA). Residues 315 to 335 (LTIALFHVAGKVFIHLPLLVF) traverse the membrane as a helical segment. Residues 336 to 337 (QP) lie on the Extracellular side of the membrane. Residues 338–358 (FWTFFALVLFWAYWIMTLLFL) form a helical membrane-spanning segment. The Cytoplasmic portion of the chain corresponds to 359–379 (GTTGSAVQNEQGFVEYKISGP). Residues 380–400 (LQYMWWYHVVGLIWISEFILA) form a helical membrane-spanning segment. Topologically, residues 401-441 (CQQMTVAGAVVTYYFTRDKRNLPFTPILASVNRLIRYHLGT) are extracellular. The helical transmembrane segment at 442–462 (VAKGSFIITLVKIPRMILMYI) threads the bilayer. The Cytoplasmic portion of the chain corresponds to 463–536 (HSQLKGKENA…RVAAINTVGD (74 aa)). Residues 537 to 557 (FMLFLGKVLIVCSTGLAGIML) form a helical membrane-spanning segment. Residues 558–565 (LNYQQDYT) lie on the Extracellular side of the membrane. The helical transmembrane segment at 566 to 586 (VWVLPLIIVCLFAFLVAHCFL) threads the bilayer. At 587 to 656 (SIYEMVVDVL…KPMASGASSA (70 aa)) the chain is on the cytoplasmic side. A disordered region spans residues 635-656 (AGKGGAADARKLKPMASGASSA). S651 carries the post-translational modification Phosphoserine.

Belongs to the CTL (choline transporter-like) family. In terms of tissue distribution, expressed in neurons, oligodendrocytes and astrocytes. Also expressed in the mucosal cell layer of the colon. In the developing brain, isoform 1 is expressed in both neurons and oligodendroglial cells, whereas isoform 2 is restricted to oligodendroglial cells.

It localises to the cell membrane. Its subcellular location is the mitochondrion outer membrane. The enzyme catalyses choline(out) + n H(+)(in) = choline(in) + n H(+)(out). It catalyses the reaction ethanolamine(out) + n H(+)(in) = ethanolamine(in) + n H(+)(out). Choline transporter, acts as a choline/H+ antiporter. Also acts as a high-affinity ethanolamine/H+ antiporter, regulating the supply of extracellular ethanolamine (Etn) for the CDP-Etn pathway, redistribute intracellular Etn and balance the CDP-Cho and CDP-Etn arms of the Kennedy pathway. Involved in membrane synthesis and myelin production. The sequence is that of Choline transporter-like protein 1 (Slc44a1) from Rattus norvegicus (Rat).